A 222-amino-acid polypeptide reads, in one-letter code: MALSAETESHIYRALRTASGAAAHLVALGFTIFVAVLARPGSSLFSWHPVLMSLAFSFLMTEALLVFSPESSLLHSLSRKGRARCHWVLQLLALLCALLGLGLVILHKEQLGKAHLVTRHGQAGLLAVLWAGLQCSGGVGLLYPKLLPRWPLAKLKLYHATSGLVGYLLGSASLLLGMCSLWFTASVTGAAWYLAVLCPVLTSLVIMNQVSNAYLYRKRIQP.

Topologically, residues 2-17 are cytoplasmic; sequence ALSAETESHIYRALRT. One can recognise a Cytochrome b561 domain in the interval 14–217; sequence ALRTASGAAA…NQVSNAYLYR (204 aa). A helical membrane pass occupies residues 18 to 38; sequence ASGAAAHLVALGFTIFVAVLA. Over 39–46 the chain is Lumenal; the sequence is RPGSSLFS. A helical membrane pass occupies residues 47 to 67; the sequence is WHPVLMSLAFSFLMTEALLVF. His48 lines the heme b pocket. Over 68 to 85 the chain is Cytoplasmic; it reads SPESSLLHSLSRKGRARC. Heme b is bound by residues His86 and His120. Residues 86 to 106 form a helical membrane-spanning segment; it reads HWVLQLLALLCALLGLGLVIL. At 107–122 the chain is on the lumenal side; sequence HKEQLGKAHLVTRHGQ. A helical transmembrane segment spans residues 123–143; the sequence is AGLLAVLWAGLQCSGGVGLLY. The Cytoplasmic segment spans residues 144 to 162; it reads PKLLPRWPLAKLKLYHATS. His159 is a heme b binding site. Residues 163–183 form a helical membrane-spanning segment; sequence GLVGYLLGSASLLLGMCSLWF. The Lumenal portion of the chain corresponds to 184-186; the sequence is TAS. The chain crosses the membrane as a helical span at residues 187–207; sequence VTGAAWYLAVLCPVLTSLVIM. The Cytoplasmic segment spans residues 208–222; that stretch reads NQVSNAYLYRKRIQP.

Heme b is required as a cofactor.

The protein resides in the endoplasmic reticulum membrane. Its subcellular location is the cytoplasmic vesicle membrane. The enzyme catalyses monodehydro-L-ascorbate radical(out) + L-ascorbate(in) = monodehydro-L-ascorbate radical(in) + L-ascorbate(out). The catalysed reaction is Fe(3+)(out) + L-ascorbate(in) = monodehydro-L-ascorbate radical(in) + Fe(2+)(out) + H(+). Transmembrane reductase that may use ascorbate as an electron donor in the cytoplasm and transfer electrons across endoplasmic reticulum membranes to reduce monodehydro-L-ascorbate radical and iron cations Fe(3+) in the lumen of that compartment. The polypeptide is Transmembrane reductase CYB561D2 (Homo sapiens (Human)).